The primary structure comprises 68 residues: DNA gyrase inhibitor YacG (68 aa).

Residues cysteine 10, cysteine 13, cysteine 29, and cysteine 33 each contribute to the Zn(2+) site. Residues 45–68 (EKRIPSDTELSDSDEWSEEDPLKH) form a disordered region. A compositionally biased stretch (acidic residues) spans 53–68 (ELSDSDEWSEEDPLKH).

It belongs to the DNA gyrase inhibitor YacG family. Interacts with GyrB. Zn(2+) serves as cofactor.

Its function is as follows. Inhibits all the catalytic activities of DNA gyrase by preventing its interaction with DNA. Acts by binding directly to the C-terminal domain of GyrB, which probably disrupts DNA binding by the gyrase. This is DNA gyrase inhibitor YacG from Yersinia pseudotuberculosis serotype O:1b (strain IP 31758).